The primary structure comprises 458 residues: Fasciclin-like arabinogalactan protein 17 (458 aa).

Residues 1–30 (MDRRIYGGSAVIHLFLFFSVLIFSAASALS) form the signal peptide. Residues 43 to 184 (NSNSVLVALL…GLIHGIERLL (142 aa)) enclose the FAS1 1 domain. Asn80 is a glycosylation site (N-linked (GlcNAc...) asparagine). Residues 207–262 (PEGAPEVDPRTNRLKKPAAPVPAGSPPALPIQSAMAPGPSLAPAPAPGPGGKQHHF) form a disordered region. Residues 225 to 235 (APVPAGSPPAL) are compositionally biased toward pro residues. The FAS1 2 domain maps to 268–411 (VKDFIHTLLH…ISVQGIDGVL (144 aa)). Asn290 is a glycosylation site (N-linked (GlcNAc...) asparagine).

This sequence belongs to the fasciclin-like AGP family.

The protein localises to the secreted. In terms of biological role, may be a cell surface adhesion protein. The polypeptide is Fasciclin-like arabinogalactan protein 17 (FLA17) (Arabidopsis thaliana (Mouse-ear cress)).